A 745-amino-acid chain; its full sequence is 5-methyltetrahydropteroyltriglutamate--homocysteine methyltransferase (745 aa).

Residues 17 to 20 (RELK) and K111 contribute to the 5-methyltetrahydropteroyltri-L-glutamate site. Residues 421-423 (IGS) and E474 contribute to the L-homocysteine site. Residues 421-423 (IGS) and E474 contribute to the L-methionine site. Residues 505–506 (RC) and W551 contribute to the 5-methyltetrahydropteroyltri-L-glutamate site. D589 lines the L-homocysteine pocket. D589 is a binding site for L-methionine. A 5-methyltetrahydropteroyltri-L-glutamate-binding site is contributed by E595. Zn(2+)-binding residues include H631, C633, and E655. H684 (proton donor) is an active-site residue. C716 provides a ligand contact to Zn(2+).

This sequence belongs to the vitamin-B12 independent methionine synthase family. Requires Zn(2+) as cofactor.

It catalyses the reaction 5-methyltetrahydropteroyltri-L-glutamate + L-homocysteine = tetrahydropteroyltri-L-glutamate + L-methionine. It functions in the pathway amino-acid biosynthesis; L-methionine biosynthesis via de novo pathway; L-methionine from L-homocysteine (MetE route): step 1/1. Catalyzes the transfer of a methyl group from 5-methyltetrahydrofolate to homocysteine resulting in methionine formation. This Thermodesulfovibrio yellowstonii (strain ATCC 51303 / DSM 11347 / YP87) protein is 5-methyltetrahydropteroyltriglutamate--homocysteine methyltransferase.